A 157-amino-acid chain; its full sequence is uncharacterized protein (157 aa).

An N-terminal signal peptide occupies residues 1–26; it reads MEALRRAHEVALRLLLCRPWASRAAA.

It is found in the secreted. This is an uncharacterized protein from Homo sapiens (Human).